Consider the following 457-residue polypeptide: Ribosomal protein uS12 methylthiotransferase RimO (457 aa).

Positions 9-128 constitute an MTTase N-terminal domain; it reads KKVHFISLGC…ILKNSDEGEK (120 aa). 6 residues coordinate [4Fe-4S] cluster: Cys18, Cys54, Cys88, Cys163, Cys167, and Cys170. The region spanning 149–384 is the Radical SAM core domain; sequence SQPGHRAYLK…MEVQQNISRE (236 aa). Residues 387–455 enclose the TRAM domain; it reads SDFVGKTLQV…EYDLIGEIVV (69 aa).

The protein belongs to the methylthiotransferase family. RimO subfamily. It depends on [4Fe-4S] cluster as a cofactor.

It localises to the cytoplasm. The catalysed reaction is L-aspartate(89)-[ribosomal protein uS12]-hydrogen + (sulfur carrier)-SH + AH2 + 2 S-adenosyl-L-methionine = 3-methylsulfanyl-L-aspartate(89)-[ribosomal protein uS12]-hydrogen + (sulfur carrier)-H + 5'-deoxyadenosine + L-methionine + A + S-adenosyl-L-homocysteine + 2 H(+). Its function is as follows. Catalyzes the methylthiolation of an aspartic acid residue of ribosomal protein uS12. In Bdellovibrio bacteriovorus (strain ATCC 15356 / DSM 50701 / NCIMB 9529 / HD100), this protein is Ribosomal protein uS12 methylthiotransferase RimO.